Here is a 173-residue protein sequence, read N- to C-terminus: Competence protein C (173 aa).

In terms of biological role, involved in transformation (genetic competence for DNA uptake). This is Competence protein C (comC) from Haemophilus influenzae (strain ATCC 51907 / DSM 11121 / KW20 / Rd).